Here is a 204-residue protein sequence, read N- to C-terminus: Ribonuclease HII (204 aa).

In terms of domain architecture, RNase H type-2 spans 17-204; it reads QLVAGVDEVG…KPVQQLLQGD (188 aa). 3 residues coordinate a divalent metal cation: aspartate 23, glutamate 24, and aspartate 115.

Belongs to the RNase HII family. Mn(2+) is required as a cofactor. Mg(2+) serves as cofactor.

The protein localises to the cytoplasm. The enzyme catalyses Endonucleolytic cleavage to 5'-phosphomonoester.. Functionally, endonuclease that specifically degrades the RNA of RNA-DNA hybrids. The polypeptide is Ribonuclease HII (Hahella chejuensis (strain KCTC 2396)).